The following is a 157-amino-acid chain: Transcription elongation factor GreA (157 aa).

This sequence belongs to the GreA/GreB family.

Its function is as follows. Necessary for efficient RNA polymerase transcription elongation past template-encoded arresting sites. The arresting sites in DNA have the property of trapping a certain fraction of elongating RNA polymerases that pass through, resulting in locked ternary complexes. Cleavage of the nascent transcript by cleavage factors such as GreA or GreB allows the resumption of elongation from the new 3'terminus. GreA releases sequences of 2 to 3 nucleotides. The protein is Transcription elongation factor GreA of Mesorhizobium japonicum (strain LMG 29417 / CECT 9101 / MAFF 303099) (Mesorhizobium loti (strain MAFF 303099)).